The primary structure comprises 421 residues: 3-isopropylmalate dehydratase large subunit (421 aa).

[4Fe-4S] cluster is bound by residues Cys-292, Cys-352, and Cys-355.

It belongs to the aconitase/IPM isomerase family. LeuC type 2 subfamily. As to quaternary structure, heterodimer of LeuC and LeuD. [4Fe-4S] cluster is required as a cofactor.

It carries out the reaction (2R,3S)-3-isopropylmalate = (2S)-2-isopropylmalate. It functions in the pathway amino-acid biosynthesis; L-leucine biosynthesis; L-leucine from 3-methyl-2-oxobutanoate: step 2/4. In terms of biological role, catalyzes the isomerization between 2-isopropylmalate and 3-isopropylmalate, via the formation of 2-isopropylmaleate. The polypeptide is 3-isopropylmalate dehydratase large subunit (Herpetosiphon aurantiacus (strain ATCC 23779 / DSM 785 / 114-95)).